Here is a 219-residue protein sequence, read N- to C-terminus: MAAEISAKTVKELRDKTAAGMMDCKKALQESNGDFEQAMESLRKKGLASANKKSDRIATEGIIESYIHMGGKLGVLVEVNCETDFVARREEFQELAKNIAMQIAANPAVKFVSLKEIPQSIIDEEKKIELEKDDLSNKPQEIKEKIVEGRIQKRLNEMILLEQSFIRDSDITIEELVKRNIAILGENIQVRRFERFNLGEGLEKREDNFSEEVEKMKKK.

Belongs to the EF-Ts family.

It localises to the plastid. The protein resides in the chloroplast. Associates with the EF-Tu.GDP complex and induces the exchange of GDP to GTP. It remains bound to the aminoacyl-tRNA.EF-Tu.GTP complex up to the GTP hydrolysis stage on the ribosome. The protein is Elongation factor Ts, chloroplastic (tsf) of Rhodomonas salina (Cryptomonas salina).